Consider the following 180-residue polypeptide: Probable cobalt-precorrin-6B C(15)-methyltransferase (decarboxylating) (180 aa).

S-adenosyl-L-methionine-binding positions include T16, 40 to 44, D61, and A89; that span reads GCGSG.

This sequence belongs to the methyltransferase superfamily. Archaeal-type CbiT family.

It carries out the reaction Co-precorrin-6B + S-adenosyl-L-methionine = Co-precorrin-7 + S-adenosyl-L-homocysteine + CO2. Its pathway is cofactor biosynthesis; adenosylcobalamin biosynthesis; cob(II)yrinate a,c-diamide from sirohydrochlorin (anaerobic route): step 8/10. In terms of biological role, catalyzes the methylation of C-15 in cobalt-precorrin-6B followed by the decarboxylation of C-12 to form cobalt-precorrin-7. This chain is Probable cobalt-precorrin-6B C(15)-methyltransferase (decarboxylating), found in Methanococcus vannielii (strain ATCC 35089 / DSM 1224 / JCM 13029 / OCM 148 / SB).